The primary structure comprises 190 residues: Small ribosomal subunit protein eS7 (190 aa).

It belongs to the eukaryotic ribosomal protein eS7 family.

The chain is Small ribosomal subunit protein eS7 (RPS7) from Avicennia marina (Grey mangrove).